We begin with the raw amino-acid sequence, 392 residues long: uncharacterized protein (392 aa).

This sequence belongs to the peptidase M24 family.

This is an uncharacterized protein from Sinorhizobium fredii (strain NBRC 101917 / NGR234).